The sequence spans 232 residues: Enolase-phosphatase E1 (232 aa).

It belongs to the HAD-like hydrolase superfamily. MasA/MtnC family. Monomer. Mg(2+) is required as a cofactor.

The catalysed reaction is 5-methylsulfanyl-2,3-dioxopentyl phosphate + H2O = 1,2-dihydroxy-5-(methylsulfanyl)pent-1-en-3-one + phosphate. Its pathway is amino-acid biosynthesis; L-methionine biosynthesis via salvage pathway; L-methionine from S-methyl-5-thio-alpha-D-ribose 1-phosphate: step 3/6. It participates in amino-acid biosynthesis; L-methionine biosynthesis via salvage pathway; L-methionine from S-methyl-5-thio-alpha-D-ribose 1-phosphate: step 4/6. Its function is as follows. Bifunctional enzyme that catalyzes the enolization of 2,3-diketo-5-methylthiopentyl-1-phosphate (DK-MTP-1-P) into the intermediate 2-hydroxy-3-keto-5-methylthiopentenyl-1-phosphate (HK-MTPenyl-1-P), which is then dephosphorylated to form the acireductone 1,2-dihydroxy-3-keto-5-methylthiopentene (DHK-MTPene). The polypeptide is Enolase-phosphatase E1 (Acidiphilium cryptum (strain JF-5)).